Consider the following 534-residue polypeptide: Pentatricopeptide repeat-containing protein At5g50990 (534 aa).

6 PPR repeats span residues 128 to 158, 164 to 198, 199 to 229, 230 to 264, 265 to 295, and 301 to 331; these read NVIT…MLSF, NKFS…GIEL, NAIL…VKRN, DVSI…HVSP, DSIT…MSRR, and KLEH…MPIE. The interval 336 to 408 is type E motif; the sequence is IWRSLLSSSR…AKGKSWLEFG (73 aa). The tract at residues 409-439 is type E(+) motif; sequence GMIHRFKAGDTSHIETKAIYKVLEGLIQKTK. A type DYW motif region spans residues 440-534; sequence SQGFVSDTDL…DGLCSCRDYW (95 aa).

This sequence belongs to the PPR family. PCMP-H subfamily.

The polypeptide is Pentatricopeptide repeat-containing protein At5g50990 (PCMP-H59) (Arabidopsis thaliana (Mouse-ear cress)).